A 178-amino-acid polypeptide reads, in one-letter code: ATP-dependent protease subunit HslV (178 aa).

Residue Thr8 is part of the active site. Na(+) contacts are provided by Gly163, Cys166, and Thr169.

Belongs to the peptidase T1B family. HslV subfamily. As to quaternary structure, a double ring-shaped homohexamer of HslV is capped on each side by a ring-shaped HslU homohexamer. The assembly of the HslU/HslV complex is dependent on binding of ATP.

It localises to the cytoplasm. The enzyme catalyses ATP-dependent cleavage of peptide bonds with broad specificity.. Its activity is regulated as follows. Allosterically activated by HslU binding. In terms of biological role, protease subunit of a proteasome-like degradation complex believed to be a general protein degrading machinery. In Treponema denticola (strain ATCC 35405 / DSM 14222 / CIP 103919 / JCM 8153 / KCTC 15104), this protein is ATP-dependent protease subunit HslV.